Consider the following 232-residue polypeptide: Large ribosomal subunit protein uL1 (232 aa).

It belongs to the universal ribosomal protein uL1 family. Part of the 50S ribosomal subunit.

In terms of biological role, binds directly to 23S rRNA. The L1 stalk is quite mobile in the ribosome, and is involved in E site tRNA release. Its function is as follows. Protein L1 is also a translational repressor protein, it controls the translation of the L11 operon by binding to its mRNA. The protein is Large ribosomal subunit protein uL1 of Ruegeria pomeroyi (strain ATCC 700808 / DSM 15171 / DSS-3) (Silicibacter pomeroyi).